The following is a 154-amino-acid chain: tRNA-splicing endonuclease (154 aa).

Active-site residues include tyrosine 86, histidine 102, and lysine 133.

The protein belongs to the tRNA-intron endonuclease family. Archaeal short subfamily. Homotetramer; although the tetramer contains four active sites, only two participate in the cleavage. Therefore, it should be considered as a dimer of dimers.

It catalyses the reaction pretRNA = a 3'-half-tRNA molecule with a 5'-OH end + a 5'-half-tRNA molecule with a 2',3'-cyclic phosphate end + an intron with a 2',3'-cyclic phosphate and a 5'-hydroxyl terminus.. Endonuclease that removes tRNA introns. Cleaves pre-tRNA at the 5'- and 3'-splice sites to release the intron. The products are an intron and two tRNA half-molecules bearing 2',3' cyclic phosphate and 5'-OH termini. Recognizes a pseudosymmetric substrate in which 2 bulged loops of 3 bases are separated by a stem of 4 bp. The protein is tRNA-splicing endonuclease of Nanoarchaeum equitans (strain Kin4-M).